A 339-amino-acid polypeptide reads, in one-letter code: Holliday junction branch migration complex subunit RuvB (339 aa).

A disordered region spans residues 1 to 22 (MIDADPTLRPEPLPEDNDRALR). A large ATPase domain (RuvB-L) region spans residues 1 to 182 (MIDADPTLRP…FGIPTRLQFY (182 aa)). ATP-binding positions include L21, R22, G63, K66, T67, T68, 129–131 (EDF), R172, Y182, and R219. Residue T67 coordinates Mg(2+). The segment at 183–253 (TIDELFEIVS…LADGALTRLG (71 aa)) is small ATPAse domain (RuvB-S). The head domain (RuvB-H) stretch occupies residues 256–339 (QLGLDGADRR…PPKSQSDLFG (84 aa)). Residues R292, R311, and R316 each contribute to the DNA site.

Belongs to the RuvB family. In terms of assembly, homohexamer. Forms an RuvA(8)-RuvB(12)-Holliday junction (HJ) complex. HJ DNA is sandwiched between 2 RuvA tetramers; dsDNA enters through RuvA and exits via RuvB. An RuvB hexamer assembles on each DNA strand where it exits the tetramer. Each RuvB hexamer is contacted by two RuvA subunits (via domain III) on 2 adjacent RuvB subunits; this complex drives branch migration. In the full resolvosome a probable DNA-RuvA(4)-RuvB(12)-RuvC(2) complex forms which resolves the HJ.

The protein resides in the cytoplasm. It catalyses the reaction ATP + H2O = ADP + phosphate + H(+). Functionally, the RuvA-RuvB-RuvC complex processes Holliday junction (HJ) DNA during genetic recombination and DNA repair, while the RuvA-RuvB complex plays an important role in the rescue of blocked DNA replication forks via replication fork reversal (RFR). RuvA specifically binds to HJ cruciform DNA, conferring on it an open structure. The RuvB hexamer acts as an ATP-dependent pump, pulling dsDNA into and through the RuvAB complex. RuvB forms 2 homohexamers on either side of HJ DNA bound by 1 or 2 RuvA tetramers; 4 subunits per hexamer contact DNA at a time. Coordinated motions by a converter formed by DNA-disengaged RuvB subunits stimulates ATP hydrolysis and nucleotide exchange. Immobilization of the converter enables RuvB to convert the ATP-contained energy into a lever motion, pulling 2 nucleotides of DNA out of the RuvA tetramer per ATP hydrolyzed, thus driving DNA branch migration. The RuvB motors rotate together with the DNA substrate, which together with the progressing nucleotide cycle form the mechanistic basis for DNA recombination by continuous HJ branch migration. Branch migration allows RuvC to scan DNA until it finds its consensus sequence, where it cleaves and resolves cruciform DNA. The protein is Holliday junction branch migration complex subunit RuvB of Ruegeria sp. (strain TM1040) (Silicibacter sp.).